We begin with the raw amino-acid sequence, 297 residues long: Aspartate carbamoyltransferase catalytic subunit (297 aa).

Residues arginine 51 and threonine 52 each contribute to the carbamoyl phosphate site. Lysine 79 lines the L-aspartate pocket. Carbamoyl phosphate-binding residues include arginine 101, histidine 130, and glutamine 133. The L-aspartate site is built by arginine 163 and arginine 215. The carbamoyl phosphate site is built by glycine 256 and proline 257.

This sequence belongs to the aspartate/ornithine carbamoyltransferase superfamily. ATCase family. Heterododecamer (2C3:3R2) of six catalytic PyrB chains organized as two trimers (C3), and six regulatory PyrI chains organized as three dimers (R2).

The catalysed reaction is carbamoyl phosphate + L-aspartate = N-carbamoyl-L-aspartate + phosphate + H(+). It participates in pyrimidine metabolism; UMP biosynthesis via de novo pathway; (S)-dihydroorotate from bicarbonate: step 2/3. In terms of biological role, catalyzes the condensation of carbamoyl phosphate and aspartate to form carbamoyl aspartate and inorganic phosphate, the committed step in the de novo pyrimidine nucleotide biosynthesis pathway. The polypeptide is Aspartate carbamoyltransferase catalytic subunit (Ehrlichia ruminantium (strain Gardel)).